Here is a 483-residue protein sequence, read N- to C-terminus: UDP-N-acetylmuramoylalanine--D-glutamate ligase (483 aa).

119–125 lines the ATP pocket; the sequence is GTNGKTT.

The protein belongs to the MurCDEF family.

Its subcellular location is the cytoplasm. The enzyme catalyses UDP-N-acetyl-alpha-D-muramoyl-L-alanine + D-glutamate + ATP = UDP-N-acetyl-alpha-D-muramoyl-L-alanyl-D-glutamate + ADP + phosphate + H(+). The protein operates within cell wall biogenesis; peptidoglycan biosynthesis. Its function is as follows. Cell wall formation. Catalyzes the addition of glutamate to the nucleotide precursor UDP-N-acetylmuramoyl-L-alanine (UMA). This Mycolicibacterium vanbaalenii (strain DSM 7251 / JCM 13017 / BCRC 16820 / KCTC 9966 / NRRL B-24157 / PYR-1) (Mycobacterium vanbaalenii) protein is UDP-N-acetylmuramoylalanine--D-glutamate ligase.